Reading from the N-terminus, the 324-residue chain is Alkanal monooxygenase beta chain (324 aa).

It belongs to the bacterial luciferase oxidoreductase family. In terms of assembly, heterodimer of an alpha and a beta chain.

The catalysed reaction is a long-chain fatty aldehyde + FMNH2 + O2 = a long-chain fatty acid + hnu + FMN + H2O + 2 H(+). In terms of biological role, light-emitting reaction in luminous bacteria. The specific role of the beta subunit is unknown, but it is absolutely required for bioluminescence activity. This is Alkanal monooxygenase beta chain (luxB) from Photorhabdus luminescens (Xenorhabdus luminescens).